Consider the following 700-residue polypeptide: Acetyl-coenzyme A carboxylase carboxyl transferase subunit beta, chloroplastic (700 aa).

Zn(2+)-binding residues include Cys34, Cys37, Cys53, and Cys56. Residues 34-56 form a C4-type zinc finger; that stretch reads CENCETLIYKKSLLEQKGVCAEC. The region spanning 445-700 is the CoA carboxyltransferase N-terminal domain; that stretch reads KKGRDTKDTE…ETIEIYMYGD (256 aa).

The protein belongs to the AccD/PCCB family. In terms of assembly, acetyl-CoA carboxylase is a heterohexamer composed of biotin carboxyl carrier protein, biotin carboxylase and 2 subunits each of ACCase subunit alpha and ACCase plastid-coded subunit beta (accD). The cofactor is Zn(2+).

It is found in the plastid. It localises to the chloroplast stroma. It catalyses the reaction N(6)-carboxybiotinyl-L-lysyl-[protein] + acetyl-CoA = N(6)-biotinyl-L-lysyl-[protein] + malonyl-CoA. The protein operates within lipid metabolism; malonyl-CoA biosynthesis; malonyl-CoA from acetyl-CoA: step 1/1. In terms of biological role, component of the acetyl coenzyme A carboxylase (ACC) complex. Biotin carboxylase (BC) catalyzes the carboxylation of biotin on its carrier protein (BCCP) and then the CO(2) group is transferred by the transcarboxylase to acetyl-CoA to form malonyl-CoA. This Cryptomeria japonica (Japanese cedar) protein is Acetyl-coenzyme A carboxylase carboxyl transferase subunit beta, chloroplastic.